The chain runs to 305 residues: Mitochondrial uncoupling protein 3 (305 aa).

3 Solcar repeats span residues 14 to 100, 112 to 204, and 213 to 299; these read TRIL…LKGL, LPLA…AKHF, and DNIF…FRLL. Transmembrane regions (helical) follow at residues 16 to 36, 69 to 89, 118 to 138, 178 to 198, 219 to 239, and 272 to 292; these read ILLA…IDLT, VIGL…YTPI, ALVG…ADLV, KGVL…LACY, TLAS…ADVV, and WKGF…FWVS.

The protein belongs to the mitochondrial carrier (TC 2.A.29) family.

The protein localises to the mitochondrion inner membrane. Functionally, PUMPS are mitochondrial transporter proteins that create proton leaks across the inner mitochondrial membrane, thus uncoupling oxidative phosphorylation. This leads to a decrease in the efficiency of oxidative phosphorylation and an increase in heat production. May be involved in protecting plant cells against oxidative stress damage. This chain is Mitochondrial uncoupling protein 3 (PUMP3), found in Arabidopsis thaliana (Mouse-ear cress).